The chain runs to 462 residues: tRNA modification GTPase MnmE (462 aa).

Residues Arg23, Glu86, and Lys125 each coordinate (6S)-5-formyl-5,6,7,8-tetrahydrofolate. In terms of domain architecture, TrmE-type G spans 221–384; that stretch reads GIPVAIVGEP…LKNQLLSFVN (164 aa). Residue Asn231 coordinates K(+). GTP contacts are provided by residues 231 to 236, 250 to 256, and 275 to 278; these read NVGKST, SEIAGTT, and DTAG. Ser235 lines the Mg(2+) pocket. K(+) is bound by residues Ser250, Ile252, and Thr255. A Mg(2+)-binding site is contributed by Thr256. Residue Lys462 coordinates (6S)-5-formyl-5,6,7,8-tetrahydrofolate.

Belongs to the TRAFAC class TrmE-Era-EngA-EngB-Septin-like GTPase superfamily. TrmE GTPase family. As to quaternary structure, homodimer. Heterotetramer of two MnmE and two MnmG subunits. K(+) is required as a cofactor.

It is found in the cytoplasm. Exhibits a very high intrinsic GTPase hydrolysis rate. Involved in the addition of a carboxymethylaminomethyl (cmnm) group at the wobble position (U34) of certain tRNAs, forming tRNA-cmnm(5)s(2)U34. In Flavobacterium psychrophilum (strain ATCC 49511 / DSM 21280 / CIP 103535 / JIP02/86), this protein is tRNA modification GTPase MnmE.